A 507-amino-acid polypeptide reads, in one-letter code: Maturase K (507 aa).

Belongs to the intron maturase 2 family. MatK subfamily.

The protein localises to the plastid. It localises to the chloroplast. Functionally, usually encoded in the trnK tRNA gene intron. Probably assists in splicing its own and other chloroplast group II introns. This chain is Maturase K, found in Persea americana (Avocado).